A 294-amino-acid chain; its full sequence is MRFSVVFAAIAALSSVVTAERGCGAIPHKGFATELMEAMDNARASSFSNTTAANVTINTYFHVITDGNKGQINNDTLQKQIEVLNKDYSGTGFSFKLVGSERTNNAGWASGNDDFGMKSSLRKGGYDSLNVYFVPMLREGLLGFCHFPTKNPGKRQLIMDGCVINSNTVPGGSAQNYDEGRTTTHEVGHFMGLYHVFNDNGGGCQQDGDMVDDTPVQSKPSSGCPKGKDSCPQQGVDSIHNYMDYSYDSCLNEFSPGQIQRMQMLWKQFRAGNSNRSPKAMKPIIPSYVSDPVM.

The signal sequence occupies residues 1 to 19; sequence MRFSVVFAAIAALSSVVTA. 3 N-linked (GlcNAc...) asparagine glycosylation sites follow: Asn-49, Asn-54, and Asn-74. His-185 is a binding site for Zn(2+). Residue Glu-186 is part of the active site. His-189 provides a ligand contact to Zn(2+). Cysteines 224 and 250 form a disulfide.

Belongs to the peptidase M43B family.

Its subcellular location is the secreted. Secreted metalloproteinase that allows assimilation of proteinaceous substrates. Plays a pivotal role as a pathogenicity determinant during infections and contributes to the ability of the pathogen to persist within the mammalian host. In Trichophyton verrucosum (strain HKI 0517), this protein is Extracellular metalloprotease TRV_07111.